The chain runs to 440 residues: Chromosomal replication initiator protein DnaA (440 aa).

Residues 1 to 74 are domain I, interacts with DnaA modulators; it reads MNPSQILENL…VQSGNKAIIN (74 aa). Residues 74-99 are domain II; the sequence is NIQAQSAKQSNKSTKIDIAHIKAQST. The domain III, AAA+ region stretch occupies residues 100 to 316; the sequence is ILNPSFTFDS…GIIISLNAYA (217 aa). ATP contacts are provided by G146, G148, K149, and T150. The domain IV, binds dsDNA stretch occupies residues 317-440; sequence TILGQEITLE…KNKILVKSQS (124 aa).

Belongs to the DnaA family. Oligomerizes as a right-handed, spiral filament on DNA at oriC.

It is found in the cytoplasm. Plays an essential role in the initiation and regulation of chromosomal replication. ATP-DnaA binds to the origin of replication (oriC) to initiate formation of the DNA replication initiation complex once per cell cycle. Binds the DnaA box (a 9 base pair repeat at the origin) and separates the double-stranded (ds)DNA. Forms a right-handed helical filament on oriC DNA; dsDNA binds to the exterior of the filament while single-stranded (ss)DNA is stabiized in the filament's interior. The ATP-DnaA-oriC complex binds and stabilizes one strand of the AT-rich DNA unwinding element (DUE), permitting loading of DNA polymerase. After initiation quickly degrades to an ADP-DnaA complex that is not apt for DNA replication. Binds acidic phospholipids. The protein is Chromosomal replication initiator protein DnaA of Campylobacter jejuni (strain RM1221).